We begin with the raw amino-acid sequence, 114 residues long: Large ribosomal subunit protein bL19 (114 aa).

It belongs to the bacterial ribosomal protein bL19 family.

Its function is as follows. This protein is located at the 30S-50S ribosomal subunit interface and may play a role in the structure and function of the aminoacyl-tRNA binding site. The polypeptide is Large ribosomal subunit protein bL19 (Lactococcus lactis subsp. cremoris (strain MG1363)).